The chain runs to 162 residues: Phosphopantetheine adenylyltransferase (162 aa).

Thr10 is a binding site for substrate. Residues 10 to 11 (TF) and His18 contribute to the ATP site. Substrate contacts are provided by Lys42, Leu74, and Arg88. Residues 89-91 (GLR), Glu99, and 124-130 (FSCISST) contribute to the ATP site.

The protein belongs to the bacterial CoaD family. As to quaternary structure, homohexamer. Mg(2+) is required as a cofactor.

The protein localises to the cytoplasm. The enzyme catalyses (R)-4'-phosphopantetheine + ATP + H(+) = 3'-dephospho-CoA + diphosphate. It participates in cofactor biosynthesis; coenzyme A biosynthesis; CoA from (R)-pantothenate: step 4/5. Functionally, reversibly transfers an adenylyl group from ATP to 4'-phosphopantetheine, yielding dephospho-CoA (dPCoA) and pyrophosphate. This is Phosphopantetheine adenylyltransferase from Francisella tularensis subsp. mediasiatica (strain FSC147).